A 443-amino-acid polypeptide reads, in one-letter code: Probable D-serine dehydratase (443 aa).

At K118 the chain carries N6-(pyridoxal phosphate)lysine.

This sequence belongs to the serine/threonine dehydratase family. DsdA subfamily. Requires pyridoxal 5'-phosphate as cofactor.

The enzyme catalyses D-serine = pyruvate + NH4(+). This is Probable D-serine dehydratase from Vibrio campbellii (strain ATCC BAA-1116).